Consider the following 55-residue polypeptide: U2-theraphotoxin-Cg1a (55 aa).

The propeptide occupies 1–19 (DSPAWLKSMERIFQSEERE). 3 disulfide bridges follow: cysteine 20/cysteine 34, cysteine 27/cysteine 39, and cysteine 33/cysteine 47.

It belongs to the neurotoxin 10 (Hwtx-1) family. 06 (F4b) subfamily. Expressed by the venom gland.

It localises to the secreted. Its function is as follows. Probable ion channel inhibitor. This Chilobrachys guangxiensis (Chinese earth tiger tarantula) protein is U2-theraphotoxin-Cg1a.